A 151-amino-acid polypeptide reads, in one-letter code: SsrA-binding protein (151 aa).

A disordered region spans residues 124-151 (GKKLHDKRESEKERDWNRQKSRLLKAHG). A compositionally biased stretch (basic and acidic residues) spans 129 to 141 (DKRESEKERDWNR). Residues 142–151 (QKSRLLKAHG) show a composition bias toward basic residues.

The protein belongs to the SmpB family.

It is found in the cytoplasm. Functionally, required for rescue of stalled ribosomes mediated by trans-translation. Binds to transfer-messenger RNA (tmRNA), required for stable association of tmRNA with ribosomes. tmRNA and SmpB together mimic tRNA shape, replacing the anticodon stem-loop with SmpB. tmRNA is encoded by the ssrA gene; the 2 termini fold to resemble tRNA(Ala) and it encodes a 'tag peptide', a short internal open reading frame. During trans-translation Ala-aminoacylated tmRNA acts like a tRNA, entering the A-site of stalled ribosomes, displacing the stalled mRNA. The ribosome then switches to translate the ORF on the tmRNA; the nascent peptide is terminated with the 'tag peptide' encoded by the tmRNA and targeted for degradation. The ribosome is freed to recommence translation, which seems to be the essential function of trans-translation. This Rhizobium johnstonii (strain DSM 114642 / LMG 32736 / 3841) (Rhizobium leguminosarum bv. viciae) protein is SsrA-binding protein.